The following is an 824-amino-acid chain: MLSTLSFLIHGEQNVQQCQTISDLECLYLINKNQPLRDSNGNPLTAHELTDDLNERLVTLKLEAFRPVVSEVLDQLEEQDDALHYFVLVATSRLSDEDFENSLKEVSLSQKLMVRIDGEYKYRLYSKPIVRNNIPQLAWDISPALRTRKVAEKDEISPPNNTANVYPVDDWGLISREFRSILSCEELILSAREGQSIEFFHLDNQGFYRNLLDMHRGISSDLFQIDGDYHFYQSRPCRVQEWNLTTTRIILQKHIFIANQLAEAIQKLKNIFVTGTDNSIRLMMQKYLIDEQQIFFEYFEYIFDESASTSYNFQSIVENLPKLNIHDASCRFQICDDIFEIVSAHYHVIREMIQVVGNINDYSPIRLNEMSFTGSQSAPQFYAKRMWRRLNVELIRFIVNKLAEMLTTPDAELMELLTDAGDAKLIKDPSIWQRLNPLQMESSLCIDEDLANRVADLIIGYQFFVNDKKSKSQKLDEKTFAKSDIQDAEELELFAKTPEFEIIIQKILDRVDVNSVTEESEELTICINKLLEQIPTTTLVEKYSQIVLEKSIKFFEFLKLFFTSAYIHMRHSTFLNRYVLDTLEREKMLKQGYDPVFLRTIGYNERSTNEDSLLVVTPPEPLNVFVSKSVTDIYSQVFTVLRMLHTALNEVLETRNSETLTREPRLRYAFFHMNTTIFAIRKNMLTLIEQSYEAFMKTLDFKSKPDQRSSHELLNVCYRAHRKFIRDVAGALMLKSNAGTTGRIIRLMVGSVSQASNACVNGDAVGAEKFYQQFQNNLLIFLDQCRLDHIRYPLYRSLEIGSEETDGRRSLNSSYSDDLSCRSY.

This is an uncharacterized protein from Caenorhabditis elegans.